The chain runs to 289 residues: Pantothenate synthetase (289 aa).

33 to 40 (MGNLHDGH) contributes to the ATP binding site. Catalysis depends on His40, which acts as the Proton donor. Gln64 contributes to the (R)-pantoate binding site. Residue Gln64 coordinates beta-alanine. 155 to 158 (GKKD) is an ATP binding site. Gln161 serves as a coordination point for (R)-pantoate. Residues Ala184 and 192–195 (LSSR) each bind ATP.

It belongs to the pantothenate synthetase family. As to quaternary structure, homodimer.

The protein localises to the cytoplasm. The catalysed reaction is (R)-pantoate + beta-alanine + ATP = (R)-pantothenate + AMP + diphosphate + H(+). The protein operates within cofactor biosynthesis; (R)-pantothenate biosynthesis; (R)-pantothenate from (R)-pantoate and beta-alanine: step 1/1. Its function is as follows. Catalyzes the condensation of pantoate with beta-alanine in an ATP-dependent reaction via a pantoyl-adenylate intermediate. The protein is Pantothenate synthetase of Acidovorax sp. (strain JS42).